A 493-amino-acid polypeptide reads, in one-letter code: UDP-N-acetylmuramoyl-L-alanyl-D-glutamate--2,6-diaminopimelate ligase (493 aa).

Threonine 32 contacts UDP-N-acetyl-alpha-D-muramoyl-L-alanyl-D-glutamate. Residue 110-116 (GTNGKTT) participates in ATP binding. Residues asparagine 151, 152 to 153 (TT), serine 179, and arginine 187 contribute to the UDP-N-acetyl-alpha-D-muramoyl-L-alanyl-D-glutamate site. At lysine 219 the chain carries N6-carboxylysine. Meso-2,6-diaminopimelate-binding positions include arginine 386, 410-413 (DNPR), glycine 460, and glutamate 464. Residues 410–413 (DNPR) carry the Meso-diaminopimelate recognition motif motif.

It belongs to the MurCDEF family. MurE subfamily. Requires Mg(2+) as cofactor. Post-translationally, carboxylation is probably crucial for Mg(2+) binding and, consequently, for the gamma-phosphate positioning of ATP.

It localises to the cytoplasm. The enzyme catalyses UDP-N-acetyl-alpha-D-muramoyl-L-alanyl-D-glutamate + meso-2,6-diaminopimelate + ATP = UDP-N-acetyl-alpha-D-muramoyl-L-alanyl-gamma-D-glutamyl-meso-2,6-diaminopimelate + ADP + phosphate + H(+). It participates in cell wall biogenesis; peptidoglycan biosynthesis. Its function is as follows. Catalyzes the addition of meso-diaminopimelic acid to the nucleotide precursor UDP-N-acetylmuramoyl-L-alanyl-D-glutamate (UMAG) in the biosynthesis of bacterial cell-wall peptidoglycan. This Lactiplantibacillus plantarum (strain ATCC BAA-793 / NCIMB 8826 / WCFS1) (Lactobacillus plantarum) protein is UDP-N-acetylmuramoyl-L-alanyl-D-glutamate--2,6-diaminopimelate ligase.